Reading from the N-terminus, the 366-residue chain is Ribosomal RNA large subunit methyltransferase M (366 aa).

S-adenosyl-L-methionine is bound by residues Ser188, 221 to 224 (CPGG), Asp240, Asp260, and Asp277. Residue Lys306 is the Proton acceptor of the active site.

This sequence belongs to the class I-like SAM-binding methyltransferase superfamily. RNA methyltransferase RlmE family. RlmM subfamily. In terms of assembly, monomer.

The protein localises to the cytoplasm. It carries out the reaction cytidine(2498) in 23S rRNA + S-adenosyl-L-methionine = 2'-O-methylcytidine(2498) in 23S rRNA + S-adenosyl-L-homocysteine + H(+). Functionally, catalyzes the 2'-O-methylation at nucleotide C2498 in 23S rRNA. This Photorhabdus sp. (strain Az29) protein is Ribosomal RNA large subunit methyltransferase M.